The following is a 435-amino-acid chain: Enolase (435 aa).

Glutamine 167 provides a ligand contact to (2R)-2-phosphoglycerate. The active-site Proton donor is glutamate 209. Residues aspartate 246, glutamate 291, and aspartate 318 each contribute to the Mg(2+) site. (2R)-2-phosphoglycerate contacts are provided by lysine 343, arginine 372, serine 373, and lysine 394. Lysine 343 functions as the Proton acceptor in the catalytic mechanism.

The protein belongs to the enolase family. In terms of assembly, component of the RNA degradosome, a multiprotein complex involved in RNA processing and mRNA degradation. The cofactor is Mg(2+).

It localises to the cytoplasm. The protein resides in the secreted. It is found in the cell surface. It carries out the reaction (2R)-2-phosphoglycerate = phosphoenolpyruvate + H2O. It functions in the pathway carbohydrate degradation; glycolysis; pyruvate from D-glyceraldehyde 3-phosphate: step 4/5. Functionally, catalyzes the reversible conversion of 2-phosphoglycerate (2-PG) into phosphoenolpyruvate (PEP). It is essential for the degradation of carbohydrates via glycolysis. This Psychromonas ingrahamii (strain DSM 17664 / CCUG 51855 / 37) protein is Enolase.